Here is a 573-residue protein sequence, read N- to C-terminus: 3-(3-hydroxy-phenyl)propionate/3-hydroxycinnamic acid hydroxylase (573 aa).

FAD is bound by residues 18 to 47 and 283 to 293; these read DVVI…IVEE and FRKGRMFLAGD.

Belongs to the PheA/TfdB FAD monooxygenase family. It depends on FAD as a cofactor.

The enzyme catalyses 3-(3-hydroxyphenyl)propanoate + NADH + O2 + H(+) = 3-(2,3-dihydroxyphenyl)propanoate + NAD(+) + H2O. It carries out the reaction (2E)-3-(3-hydroxyphenyl)prop-2-enoate + NADH + O2 + H(+) = (2E)-3-(2,3-dihydroxyphenyl)prop-2-enoate + NAD(+) + H2O. It functions in the pathway aromatic compound metabolism; 3-phenylpropanoate degradation. Catalyzes the insertion of one atom of molecular oxygen into position 2 of the phenyl ring of 3-(3-hydroxyphenyl)propionate (3-HPP) and hydroxycinnamic acid (3HCI). The sequence is that of 3-(3-hydroxy-phenyl)propionate/3-hydroxycinnamic acid hydroxylase from Mycobacterium sp. (strain KMS).